The sequence spans 475 residues: Equilibrative nucleoside transporter 3 (475 aa).

A disordered region spans residues 1–24; it reads MAVVSEDDFQHSSNSTYRTTSSSL. Topologically, residues 1-53 are cytoplasmic; it reads MAVVSEDDFQHSSNSTYRTTSSSLRADQEALLEKLLDRPPPGLQRPEDRFCGT. Over residues 12–23 the composition is skewed to low complexity; sequence SSNSTYRTTSSS. 2 positions are modified to phosphoserine: serine 21 and serine 23. Residues 31–32 carry the Dileucine internalization motif motif; it reads LL. The helical transmembrane segment at 54–74 threads the bilayer; it reads YIIFFSLGIGSLLPWNFFITA. At 75–105 the chain is on the extracellular side; it reads KEYWMFKLRNSSSPATGEDPEGSDILNYFES. Residue asparagine 84 is glycosylated (N-linked (GlcNAc...) asparagine). Residues 106 to 126 form a helical membrane-spanning segment; sequence YLAVASTVPSMLCLVANFLLV. The Cytoplasmic portion of the chain corresponds to 127-134; the sequence is NRVAVHIR. Residues 135–155 form a helical membrane-spanning segment; it reads VLASLTVILAIFMVITALVKV. At 156–162 the chain is on the extracellular side; it reads DTSSWTR. A helical transmembrane segment spans residues 163-183; that stretch reads GFFAVTIVCMVILSGASTVFS. Residues 184–199 are Cytoplasmic-facing; it reads SSIYGMTGSFPMRNSQ. Residues 200–220 form a helical membrane-spanning segment; the sequence is ALISGGAMGGTVSAVASLVDL. Over 221 to 230 the chain is Extracellular; that stretch reads AASSDVRNSA. A helical transmembrane segment spans residues 231-251; sequence LAFFLTATVFLVLCMGLYLLL. Residues 252 to 305 lie on the Cytoplasmic side of the membrane; the sequence is SRLEYARYYMRPVLAAHVFSGEEELPQDSLSAPSVASRFIDSHTPPLRPILKKT. Residues 306–326 form a helical membrane-spanning segment; it reads ASLGFCVTYVFFITSLIYPAI. The Extracellular portion of the chain corresponds to 327 to 337; that stretch reads CTNIESLNKGS. The chain crosses the membrane as a helical span at residues 338–358; that stretch reads GSLWTTKFFIPLTTFLLYNFA. Topologically, residues 359-377 are cytoplasmic; that stretch reads DLCGRQLTAWIQVPGPNSK. A helical membrane pass occupies residues 378 to 398; sequence ALPGFVLLRTCLIPLFVLCNY. At 399-415 the chain is on the extracellular side; it reads QPRVHLKTVVFQSDVYP. A helical transmembrane segment spans residues 416-436; it reads ALLSSLLGLSNGYLSTLALLY. The Cytoplasmic segment spans residues 437–454; that stretch reads GPKIVPRELAEATGVVMS. A helical membrane pass occupies residues 455–475; the sequence is FYVCLGLTLGSACSTLLVHLI.

It belongs to the SLC29A/ENT transporter (TC 2.A.57) family. Widely expressed in both adult and fetal tissues. Highest levels in placenta, uterus, ovary, spleen, lymph node and bone marrow. Expressed in liver. Lowest levels in brain and heart. Expressed in macrophages.

It localises to the lysosome membrane. The protein localises to the late endosome membrane. Its subcellular location is the mitochondrion membrane. It is found in the cell membrane. The catalysed reaction is adenosine(in) = adenosine(out). The enzyme catalyses guanosine(in) = guanosine(out). It catalyses the reaction inosine(in) = inosine(out). It carries out the reaction uridine(out) = uridine(in). The catalysed reaction is cytidine(in) = cytidine(out). The enzyme catalyses thymidine(in) = thymidine(out). It catalyses the reaction 2'-deoxyadenosine(in) = 2'-deoxyadenosine(out). It carries out the reaction 2'-deoxycytidine(in) = 2'-deoxycytidine(out). The catalysed reaction is guanine(out) = guanine(in). The enzyme catalyses uracil(in) = uracil(out). It catalyses the reaction (R)-noradrenaline(out) = (R)-noradrenaline(in). It carries out the reaction dopamine(out) = dopamine(in). The catalysed reaction is serotonin(out) = serotonin(in). The enzyme catalyses tyramine(in) = tyramine(out). It catalyses the reaction ATP(in) = ATP(out). Its function is as follows. Uniporter that mediates the facilitative transport of nucleoside across lysosomal and mitochondrial membranes. Functions as a non-electrogenic Na(+)-independent transporter. Substrate transport is pH-dependent and enhanced under acidic condition, probably reflecting the location of the transporter in acidic intracellular compartments. Proton is not a cotransporting ion but most likely change the ionization state of the transporter which dictates transport-permissible/impermissible conformation for nucleoside translocation. May direct the nucleoside transport from lysosomes to cytosol or cytosol to mitochondria to facilitate the fundamental function of salvage synthesis of nucleic acids. Involved in the transport of nucleosides (adenosine, guanosine, uridine, thymidine, cytidine and inosine) and deoxynucleosides (deoxyadenosine, deoxycytidine). Also mediates transport of purine nucleobases (adenine, guanine) and pyrimidine nucleobases (uracil). Also able to transport monoamine neurotransmitters dopamine, serotonin, noradrenaline and tyramine. Capable of transporting ATP. Mediates nucleoside export from lysosomes in macrophages, which regulates macrophage functions and numbers. This is Equilibrative nucleoside transporter 3 from Homo sapiens (Human).